The chain runs to 249 residues: FMN reductase (NADPH) (249 aa).

This sequence belongs to the flavin oxidoreductase frp family. As to quaternary structure, homodimer.

The catalysed reaction is FMNH2 + NADP(+) = FMN + NADPH + 2 H(+). Reduces FMNH(2) to FMN, with NADPH as reductant. It also reduces nitroaromatic compounds, quinones and azo dyes. In Bacillus subtilis (strain 168), this protein is FMN reductase (NADPH) (nfrA1).